Reading from the N-terminus, the 251-residue chain is Triosephosphate isomerase (251 aa).

Residue 9-11 participates in substrate binding; it reads NWK. The active-site Electrophile is H94. Residue E166 is the Proton acceptor of the active site. Residues G172, S211, and 232 to 233 contribute to the substrate site; that span reads GG.

Belongs to the triosephosphate isomerase family. In terms of assembly, homodimer.

Its subcellular location is the cytoplasm. The catalysed reaction is D-glyceraldehyde 3-phosphate = dihydroxyacetone phosphate. It functions in the pathway carbohydrate biosynthesis; gluconeogenesis. Its pathway is carbohydrate degradation; glycolysis; D-glyceraldehyde 3-phosphate from glycerone phosphate: step 1/1. Involved in the gluconeogenesis. Catalyzes stereospecifically the conversion of dihydroxyacetone phosphate (DHAP) to D-glyceraldehyde-3-phosphate (G3P). The chain is Triosephosphate isomerase from Xanthomonas campestris pv. campestris (strain 8004).